A 112-amino-acid chain; its full sequence is uncharacterized protein (112 aa).

This is an uncharacterized protein from Methanocaldococcus jannaschii (strain ATCC 43067 / DSM 2661 / JAL-1 / JCM 10045 / NBRC 100440) (Methanococcus jannaschii).